The following is a 208-amino-acid chain: Large ribosomal subunit protein eL13 (208 aa).

2 positions are modified to phosphoserine: Ser-177 and Ser-180.

Belongs to the eukaryotic ribosomal protein eL13 family. Component of the large ribosomal subunit (LSU). Mature yeast ribosomes consist of a small (40S) and a large (60S) subunit. The 40S small subunit contains 1 molecule of ribosomal RNA (18S rRNA) and at least 33 different proteins. The large 60S subunit contains 3 rRNA molecules (25S, 5.8S and 5S rRNA) and at least 46 different proteins.

The protein resides in the cytoplasm. Component of the ribosome, a large ribonucleoprotein complex responsible for the synthesis of proteins in the cell. The small ribosomal subunit (SSU) binds messenger RNAs (mRNAs) and translates the encoded message by selecting cognate aminoacyl-transfer RNA (tRNA) molecules. The large subunit (LSU) contains the ribosomal catalytic site termed the peptidyl transferase center (PTC), which catalyzes the formation of peptide bonds, thereby polymerizing the amino acids delivered by tRNAs into a polypeptide chain. The nascent polypeptides leave the ribosome through a tunnel in the LSU and interact with protein factors that function in enzymatic processing, targeting, and the membrane insertion of nascent chains at the exit of the ribosomal tunnel. The protein is Large ribosomal subunit protein eL13 (rpl13) of Schizosaccharomyces pombe (strain 972 / ATCC 24843) (Fission yeast).